The chain runs to 121 residues: Protein ripply2.1 (121 aa).

Residues 1-69 are disordered; it reads MEPNQQRSCG…DKGKPPSFQH (69 aa). The WRPW motif motif lies at 29–32; that stretch reads WRPW. Positions 39–57 are enriched in polar residues; the sequence is HVQNPPTAQQQFYSDNQSH. The tract at residues 69-104 is ripply homology domain; the sequence is HPVKLFWPKSRCYDFMYQEAEELLRHFPVQATISLY.

This sequence belongs to the ripply family. As to expression, expressed in the presomitic mesoderm (PSM) in the anterior halves of somitomeres S-0, S-I and S-II and in the newly formed somites.

It is found in the nucleus. Its function is as follows. Required during somitogenesis to regulate somite differentiation and the positioning of the presomitic mesoderm-front. Represses the expression of genes involved in somite segmentation by acting with the corepressor tle4 to down-regulate the transcriptional activity of tbx6. Also regulates retinoic acid signaling during somitogenesis and is necessary for the expression of aldh1a2/raldh2. The polypeptide is Protein ripply2.1 (ripply2.1) (Xenopus laevis (African clawed frog)).